The sequence spans 476 residues: Glycogen synthase (476 aa).

K15 contacts ADP-alpha-D-glucose.

The protein belongs to the glycosyltransferase 1 family. Bacterial/plant glycogen synthase subfamily.

The enzyme catalyses [(1-&gt;4)-alpha-D-glucosyl](n) + ADP-alpha-D-glucose = [(1-&gt;4)-alpha-D-glucosyl](n+1) + ADP + H(+). It participates in glycan biosynthesis; glycogen biosynthesis. In terms of biological role, synthesizes alpha-1,4-glucan chains using ADP-glucose. In Ligilactobacillus salivarius (strain UCC118) (Lactobacillus salivarius), this protein is Glycogen synthase.